The chain runs to 335 residues: MRN complex-interacting protein (335 aa).

2 disordered regions span residues 75–102 (EEAV…PSKP) and 118–194 (QELD…ALST). S100 bears the Phosphoserine mark. Positions 129 to 142 (TQLSTSAERPSSPA) are enriched in polar residues. Residues 145–148 (RKRK) carry the Nuclear localization signal (NLS) motif. Over residues 177–194 (STGLFGTEQQGTSPALST) the composition is skewed to polar residues. The interval 203-230 (FPRWKLPSPVTQVNAPSSKWARFLLAPG) is necessary for the association with the MRN complex. Residues 273-335 (RPPQAIHTTT…TTGEDFDDDL (63 aa)) are disordered. Positions 286–297 (DRPDRKTREQPR) are enriched in basic and acidic residues.

Belongs to the MRNIP family. In terms of assembly, associates with the MRE11-RAD50-NBN (MRN) damage-sensing complex; this association is constitutive. Interacts with MRE11. Interacts with NBN. Interacts with RAD50. In terms of processing, phosphorylated; phosphorylation is constitutive and occurs in the absence of any DNA-damaging stimulus. Phosphorylation is necessary for its nuclear retention.

It localises to the nucleus. The protein localises to the nucleoplasm. In terms of biological role, plays a role in the cellular response to DNA damage and the maintenance of genome stability through its association with the MRN damage-sensing complex. Promotes chromatin loading and activity of the MRN complex to facilitate subsequent ATM-mediated DNA damage response signaling and DNA repair. The chain is MRN complex-interacting protein from Mus musculus (Mouse).